The following is a 154-amino-acid chain: Ribosomal RNA large subunit methyltransferase H (154 aa).

G102 provides a ligand contact to S-adenosyl-L-methionine.

The protein belongs to the RNA methyltransferase RlmH family. As to quaternary structure, homodimer.

The protein resides in the cytoplasm. The enzyme catalyses pseudouridine(1915) in 23S rRNA + S-adenosyl-L-methionine = N(3)-methylpseudouridine(1915) in 23S rRNA + S-adenosyl-L-homocysteine + H(+). In terms of biological role, specifically methylates the pseudouridine at position 1915 (m3Psi1915) in 23S rRNA. The protein is Ribosomal RNA large subunit methyltransferase H of Caulobacter sp. (strain K31).